A 189-amino-acid chain; its full sequence is uncharacterized protein (189 aa).

The protein belongs to the isochorismatase family.

This is an uncharacterized protein from Bacillus subtilis (strain 168).